Here is a 194-residue protein sequence, read N- to C-terminus: Outer surface 22 kDa lipoprotein (194 aa).

Residues 1–21 form the signal peptide; that stretch reads MYKNGFFKNYLSLFLIFLVIA. A lipid anchor (N-palmitoyl cysteine) is attached at Cys22. A lipid anchor (S-diacylglycerol cysteine) is attached at Cys22.

Its subcellular location is the cell outer membrane. The polypeptide is Outer surface 22 kDa lipoprotein (p22) (Borreliella burgdorferi (strain ZS7) (Borrelia burgdorferi)).